The sequence spans 428 residues: Serine--tRNA ligase (428 aa).

231-233 (TSE) contributes to the L-serine binding site. Residues 262-264 (RRE) and valine 278 contribute to the ATP site. Glutamate 285 lines the L-serine pocket. 349–352 (ELTS) is a binding site for ATP. Residue threonine 384 coordinates L-serine.

This sequence belongs to the class-II aminoacyl-tRNA synthetase family. Type-1 seryl-tRNA synthetase subfamily. In terms of assembly, homodimer. The tRNA molecule binds across the dimer.

The protein localises to the cytoplasm. The enzyme catalyses tRNA(Ser) + L-serine + ATP = L-seryl-tRNA(Ser) + AMP + diphosphate + H(+). It carries out the reaction tRNA(Sec) + L-serine + ATP = L-seryl-tRNA(Sec) + AMP + diphosphate + H(+). It functions in the pathway aminoacyl-tRNA biosynthesis; selenocysteinyl-tRNA(Sec) biosynthesis; L-seryl-tRNA(Sec) from L-serine and tRNA(Sec): step 1/1. Its function is as follows. Catalyzes the attachment of serine to tRNA(Ser). Is also able to aminoacylate tRNA(Sec) with serine, to form the misacylated tRNA L-seryl-tRNA(Sec), which will be further converted into selenocysteinyl-tRNA(Sec). The sequence is that of Serine--tRNA ligase from Bifidobacterium longum subsp. infantis (strain ATCC 15697 / DSM 20088 / JCM 1222 / NCTC 11817 / S12).